Reading from the N-terminus, the 324-residue chain is NAC domain-containing protein 21/22 (324 aa).

Positions 19-171 constitute an NAC domain; sequence LPPGFRFHPK…DWVLCRVFHK (153 aa). Residues 120-137 carry the Bipartite nuclear localization signal motif; the sequence is RKTLVFYQGRAPRGRKTD.

Dimer. Interacts with SINAT5. In terms of processing, ubiquitinated. The interaction with SINAT5 mediate its proteasome-dependent degradation. As to expression, predominantly expressed in the root tip and in lateral root initiation sites. Also detected in expanding cotyledon, and in leaf primordia.

The protein localises to the nucleus. In terms of biological role, transcriptional activator that mediates auxin signaling to promote lateral root development. Activates the expression of two downstream auxin-responsive genes, DBP and AIR3. In Arabidopsis thaliana (Mouse-ear cress), this protein is NAC domain-containing protein 21/22 (NAC021).